Reading from the N-terminus, the 298-residue chain is Protease HtpX homolog (298 aa).

A run of 2 helical transmembrane segments spans residues 5 to 25 (IFLFILTNILVLTTIGIVLSV) and 45 to 65 (MALLVFSLVVGFVGSFTSLAI). H155 serves as a coordination point for Zn(2+). Residue E156 is part of the active site. Position 159 (H159) interacts with Zn(2+). 2 helical membrane-spanning segments follow: residues 170–190 (LLQGIVNTFVVFLSRIAAWIA) and 204–224 (FIAMIIFQIVFSILGSLVVFA). E230 is a Zn(2+) binding site.

This sequence belongs to the peptidase M48B family. It depends on Zn(2+) as a cofactor.

The protein localises to the cell membrane. This is Protease HtpX homolog from Bacillus subtilis (strain 168).